A 728-amino-acid polypeptide reads, in one-letter code: 1,4-alpha-glucan branching enzyme GlgB (728 aa).

The Nucleophile role is filled by D405. E458 acts as the Proton donor in catalysis.

Belongs to the glycosyl hydrolase 13 family. GlgB subfamily. Monomer.

The enzyme catalyses Transfers a segment of a (1-&gt;4)-alpha-D-glucan chain to a primary hydroxy group in a similar glucan chain.. Its pathway is glycan biosynthesis; glycogen biosynthesis. Catalyzes the formation of the alpha-1,6-glucosidic linkages in glycogen by scission of a 1,4-alpha-linked oligosaccharide from growing alpha-1,4-glucan chains and the subsequent attachment of the oligosaccharide to the alpha-1,6 position. This chain is 1,4-alpha-glucan branching enzyme GlgB, found in Escherichia coli O6:H1 (strain CFT073 / ATCC 700928 / UPEC).